Consider the following 677-residue polypeptide: L-type lectin-domain containing receptor kinase IV.2 (677 aa).

The signal sequence occupies residues 1 to 22; sequence MFVKLKLIFFFFLLCQIMISSS. Over 23 to 291 the chain is Extracellular; it reads QNLNFTYNGF…EPRRISEFYK (269 aa). Positions 24–262 are legume-lectin like; sequence NLNFTYNGFH…EHFLVGWSFR (239 aa). N-linked (GlcNAc...) asparagine glycosylation is found at asparagine 26, asparagine 57, asparagine 81, asparagine 128, asparagine 134, asparagine 171, asparagine 186, and asparagine 203. The chain crosses the membrane as a helical span at residues 292 to 312; it reads IGMPLISLSLIFSIIFLAFYI. Over 313 to 677 the chain is Cytoplasmic; the sequence is VRRKKKYEEE…IADSLLSGGR (365 aa). The Protein kinase domain maps to 347–625; it reads FKEKDLLGSG…LQYLRGDMAL (279 aa). ATP contacts are provided by residues 353–361 and lysine 376; that span reads LGSGGFGRV. The Proton acceptor role is filled by aspartate 472.

It in the C-terminal section; belongs to the protein kinase superfamily. Ser/Thr protein kinase family. The protein in the N-terminal section; belongs to the leguminous lectin family.

It localises to the cell membrane. It carries out the reaction L-seryl-[protein] + ATP = O-phospho-L-seryl-[protein] + ADP + H(+). The catalysed reaction is L-threonyl-[protein] + ATP = O-phospho-L-threonyl-[protein] + ADP + H(+). Its function is as follows. Required during pollen development. In terms of biological role, involved in resistance response to the pathogenic bacteria Pseudomonas syringae. In Arabidopsis thaliana (Mouse-ear cress), this protein is L-type lectin-domain containing receptor kinase IV.2.